The sequence spans 269 residues: Signal recognition particle SEC65 subunit (269 aa).

Disordered stretches follow at residues 30–65 (RTPI…DKSV) and 236–269 (PMTK…KIRG). Residues 248-258 (QPQVKAPQAPK) show a composition bias toward low complexity. The segment covering 259-269 (QPKKKVMKIRG) has biased composition (basic residues).

Belongs to the SRP19 family. In terms of assembly, fungal signal recognition particle consists of a 7S RNA molecule (scR1) and at least six protein subunits: SRP72, SRP68, SRP54, SEC65, SRP21 andSRP14.

It is found in the cytoplasm. Signal-recognition-particle assembly has a crucial role in targeting secretory proteins to the rough endoplasmic reticulum membrane. It must be involved intimately in the translocation of a wide variety of protein substrates. The chain is Signal recognition particle SEC65 subunit (SEC65) from Debaryomyces hansenii (strain ATCC 36239 / CBS 767 / BCRC 21394 / JCM 1990 / NBRC 0083 / IGC 2968) (Yeast).